Consider the following 171-residue polypeptide: Protein-export protein SecB (171 aa).

Belongs to the SecB family. As to quaternary structure, homotetramer, a dimer of dimers. One homotetramer interacts with 1 SecA dimer.

The protein localises to the cytoplasm. One of the proteins required for the normal export of preproteins out of the cell cytoplasm. It is a molecular chaperone that binds to a subset of precursor proteins, maintaining them in a translocation-competent state. It also specifically binds to its receptor SecA. The sequence is that of Protein-export protein SecB from Xanthomonas oryzae pv. oryzae (strain MAFF 311018).